Here is a 145-residue protein sequence, read N- to C-terminus: D-aminoacyl-tRNA deacylase (145 aa).

Residues 137-138 carry the Gly-cisPro motif, important for rejection of L-amino acids motif; it reads GP.

It belongs to the DTD family. In terms of assembly, homodimer.

Its subcellular location is the cytoplasm. The catalysed reaction is glycyl-tRNA(Ala) + H2O = tRNA(Ala) + glycine + H(+). It carries out the reaction a D-aminoacyl-tRNA + H2O = a tRNA + a D-alpha-amino acid + H(+). An aminoacyl-tRNA editing enzyme that deacylates mischarged D-aminoacyl-tRNAs. Also deacylates mischarged glycyl-tRNA(Ala), protecting cells against glycine mischarging by AlaRS. Acts via tRNA-based rather than protein-based catalysis; rejects L-amino acids rather than detecting D-amino acids in the active site. By recycling D-aminoacyl-tRNA to D-amino acids and free tRNA molecules, this enzyme counteracts the toxicity associated with the formation of D-aminoacyl-tRNA entities in vivo and helps enforce protein L-homochirality. The chain is D-aminoacyl-tRNA deacylase from Deinococcus radiodurans (strain ATCC 13939 / DSM 20539 / JCM 16871 / CCUG 27074 / LMG 4051 / NBRC 15346 / NCIMB 9279 / VKM B-1422 / R1).